The chain runs to 215 residues: N-(5'-phosphoribosyl)anthranilate isomerase (215 aa).

Belongs to the TrpF family.

It catalyses the reaction N-(5-phospho-beta-D-ribosyl)anthranilate = 1-(2-carboxyphenylamino)-1-deoxy-D-ribulose 5-phosphate. Its pathway is amino-acid biosynthesis; L-tryptophan biosynthesis; L-tryptophan from chorismate: step 3/5. The protein is N-(5'-phosphoribosyl)anthranilate isomerase of Ruegeria sp. (strain TM1040) (Silicibacter sp.).